Consider the following 295-residue polypeptide: Ribosome production factor 1 (295 aa).

A disordered region spans residues H24–L47. Positions A38–L47 are enriched in basic and acidic residues. Positions P93 to E276 constitute a Brix domain. The interval V254–Q271 is RNA-binding.

Part of a complex that includes BRX1, RPF1, RPF2 and SSF1 or SSF2.

It localises to the nucleus. The protein localises to the nucleolus. In terms of biological role, essential protein. Required for biogenesis of the 60S ribosomal subunit. The polypeptide is Ribosome production factor 1 (RPF1) (Saccharomyces cerevisiae (strain ATCC 204508 / S288c) (Baker's yeast)).